Reading from the N-terminus, the 162-residue chain is RNA pyrophosphohydrolase (162 aa).

Residues 11–155 (PYRPCVGIVL…KRAVYEEVVA (145 aa)) enclose the Nudix hydrolase domain. A Nudix box motif is present at residues 45-66 (GGIDEGEKPREAALRELWEETG).

The protein belongs to the Nudix hydrolase family. RppH subfamily. A divalent metal cation serves as cofactor.

Accelerates the degradation of transcripts by removing pyrophosphate from the 5'-end of triphosphorylated RNA, leading to a more labile monophosphorylated state that can stimulate subsequent ribonuclease cleavage. This is RNA pyrophosphohydrolase from Cereibacter sphaeroides (strain ATCC 17029 / ATH 2.4.9) (Rhodobacter sphaeroides).